A 301-amino-acid polypeptide reads, in one-letter code: Homoserine kinase (301 aa).

Residue lysine 89–alanine 99 coordinates ATP.

This sequence belongs to the GHMP kinase family. Homoserine kinase subfamily.

It localises to the cytoplasm. It carries out the reaction L-homoserine + ATP = O-phospho-L-homoserine + ADP + H(+). The protein operates within amino-acid biosynthesis; L-threonine biosynthesis; L-threonine from L-aspartate: step 4/5. Functionally, catalyzes the ATP-dependent phosphorylation of L-homoserine to L-homoserine phosphate. This is Homoserine kinase from Methanococcus maripaludis (strain C5 / ATCC BAA-1333).